The chain runs to 154 residues: D-aminoacyl-tRNA deacylase (154 aa).

A Gly-cisPro motif, important for rejection of L-amino acids motif is present at residues 142–143 (GP).

The protein belongs to the DTD family. As to quaternary structure, homodimer.

The protein resides in the cytoplasm. It catalyses the reaction glycyl-tRNA(Ala) + H2O = tRNA(Ala) + glycine + H(+). The enzyme catalyses a D-aminoacyl-tRNA + H2O = a tRNA + a D-alpha-amino acid + H(+). Its function is as follows. An aminoacyl-tRNA editing enzyme that deacylates mischarged D-aminoacyl-tRNAs. Also deacylates mischarged glycyl-tRNA(Ala), protecting cells against glycine mischarging by AlaRS. Acts via tRNA-based rather than protein-based catalysis; rejects L-amino acids rather than detecting D-amino acids in the active site. By recycling D-aminoacyl-tRNA to D-amino acids and free tRNA molecules, this enzyme counteracts the toxicity associated with the formation of D-aminoacyl-tRNA entities in vivo and helps enforce protein L-homochirality. The protein is D-aminoacyl-tRNA deacylase of Polaromonas sp. (strain JS666 / ATCC BAA-500).